The following is a 187-amino-acid chain: Elongation factor P (187 aa).

Belongs to the elongation factor P family.

It is found in the cytoplasm. It functions in the pathway protein biosynthesis; polypeptide chain elongation. Involved in peptide bond synthesis. Stimulates efficient translation and peptide-bond synthesis on native or reconstituted 70S ribosomes in vitro. Probably functions indirectly by altering the affinity of the ribosome for aminoacyl-tRNA, thus increasing their reactivity as acceptors for peptidyl transferase. This Corynebacterium diphtheriae (strain ATCC 700971 / NCTC 13129 / Biotype gravis) protein is Elongation factor P.